Here is a 187-residue protein sequence, read N- to C-terminus: MASTADFKNGLVLNIDGQLWQITEFQHVKPGKGPAFVRTKLKNVLSGKVVDKTFNAGVKVETATVDRRDTTYLYRDGDSFVFMDSQDYEQHHLSPELVGDAHRFLLEGMTVQVAFNEGAALYIELPVSVELEVTHTEPGLQGDRSSAGTKPATVETGAEIQVPLFINTGDRLKVDTRDASYLGRVNG.

It belongs to the elongation factor P family.

It localises to the cytoplasm. Its pathway is protein biosynthesis; polypeptide chain elongation. Involved in peptide bond synthesis. Stimulates efficient translation and peptide-bond synthesis on native or reconstituted 70S ribosomes in vitro. Probably functions indirectly by altering the affinity of the ribosome for aminoacyl-tRNA, thus increasing their reactivity as acceptors for peptidyl transferase. This Mycobacteroides abscessus (strain ATCC 19977 / DSM 44196 / CCUG 20993 / CIP 104536 / JCM 13569 / NCTC 13031 / TMC 1543 / L948) (Mycobacterium abscessus) protein is Elongation factor P.